A 291-amino-acid polypeptide reads, in one-letter code: Quinol oxidase subunit 2 (291 aa).

Residues 1 to 28 (MQLKKAFWKLASLLPXSLLLFLGGCDKK) form the signal peptide. Helical transmembrane passes span 49-69 (SFLL…VILI) and 91-111 (LEII…IPTV).

This sequence belongs to the cytochrome c oxidase subunit 2 family.

The protein resides in the cell membrane. It catalyses the reaction 2 a quinol + O2 = 2 a quinone + 2 H2O. Its function is as follows. Catalyzes quinol oxidation with the concomitant reduction of oxygen to water. Subunit II transfers the electrons from a quinol to the binuclear center of the catalytic subunit I. In Bacillus cereus (strain ATCC 10987 / NRS 248), this protein is Quinol oxidase subunit 2.